The sequence spans 745 residues: Cysteine protease atg4 (745 aa).

Low complexity-rich tracts occupy residues Gln29 to Gln42, Ser52 to Thr64, and Asn194 to Asn215. Disordered stretches follow at residues Gln29–Asn68 and Phe192–Asn215. Catalysis depends on Cys262, which acts as the Nucleophile. Disordered stretches follow at residues Leu344 to Glu363 and Gln439 to Asn480. Low complexity predominate over residues Gln439 to Asn477. Residues Asp562 and His564 contribute to the active site. Residues His686–Gly745 are disordered. Over residues Pro688–Pro719 the composition is skewed to low complexity. Over residues Ser734–Gly745 the composition is skewed to acidic residues.

Belongs to the peptidase C54 family.

The protein localises to the cytoplasm. It catalyses the reaction [protein]-C-terminal L-amino acid-glycyl-phosphatidylethanolamide + H2O = [protein]-C-terminal L-amino acid-glycine + a 1,2-diacyl-sn-glycero-3-phosphoethanolamine. Its function is as follows. Cysteine protease that plays a key role in autophagy by mediating both proteolytic activation and delipidation of ATG8 family proteins. The protease activity is required for proteolytic activation of ATG8 family proteins: cleaves the C-terminal amino acid of ATG8 proteins to reveal a C-terminal glycine. Exposure of the glycine at the C-terminus is essential for ATG8 proteins conjugation to phosphatidylethanolamine (PE) and insertion to membranes, which is necessary for autophagy. In addition to the protease activity, also mediates delipidation of PE-conjugated ATG8 proteins. In Dictyostelium discoideum (Social amoeba), this protein is Cysteine protease atg4 (atg4-1).